Consider the following 107-residue polypeptide: Lipid-anchored protein YDL012C (107 aa).

The segment covering 1-18 has biased composition (polar residues); sequence MSAQDYYGNSASKQSYSR. The disordered stretch occupies residues 1–86; that stretch reads MSAQDYYGNS…VQQQPASSGN (86 aa). An N-acetylserine modification is found at Ser2. A Glycyl lysine isopeptide (Lys-Gly) (interchain with G-Cter in ubiquitin) cross-link involves residue Lys13. The span at 35 to 81 shows a compositional bias: low complexity; it reads PSQSQQNYYPPQQQQQQYQQQPQYYQQQQPQYYQQHPQQPIYVQQQP.

The protein belongs to the CYSTM1 family.

The protein resides in the cell membrane. In Saccharomyces cerevisiae (strain ATCC 204508 / S288c) (Baker's yeast), this protein is Lipid-anchored protein YDL012C.